A 514-amino-acid chain; its full sequence is Efflux pump aflT (514 aa).

Helical transmembrane passes span 13–33, 61–81, 85–105, 116–136, 146–166, 174–194, 218–238, 247–267, 289–309, and 321–341; these read ISGM…FCVA, SAYL…YALF, WVFL…GVAP, IAGV…AHIV, GLLG…GGAF, WCFY…LFLL, GTIV…WGGV, IIAL…IQVL, VFVF…PIWF, and GIDS…SGAV. An N-linked (GlcNAc...) asparagine glycan is attached at Asn343. The next 4 helical transmembrane spans lie at 351–371, 378–398, 411–431, and 485–505; these read WFIV…LFTV, WIGF…QGAV, IGTA…TSVA, and LDVF…AVGI.

It belongs to the major facilitator superfamily. TCR/Tet family.

It localises to the cell membrane. Efflux pump; part of the gene cluster that mediates the biosynthesis of aflatoxins. The sequence is that of Efflux pump aflT from Aspergillus parasiticus (strain ATCC 56775 / NRRL 5862 / SRRC 143 / SU-1).